The primary structure comprises 249 residues: 4-hydroxy-tetrahydrodipicolinate reductase (249 aa).

Residues 77-79 (ATT) and 101-104 (SYNT) contribute to the NAD(+) site. Catalysis depends on His-133, which acts as the Proton donor/acceptor. Residue His-134 coordinates (S)-2,3,4,5-tetrahydrodipicolinate. Lys-137 functions as the Proton donor in the catalytic mechanism. 143–144 (GT) is a (S)-2,3,4,5-tetrahydrodipicolinate binding site.

The protein belongs to the DapB family.

Its subcellular location is the cytoplasm. It carries out the reaction (S)-2,3,4,5-tetrahydrodipicolinate + NAD(+) + H2O = (2S,4S)-4-hydroxy-2,3,4,5-tetrahydrodipicolinate + NADH + H(+). It catalyses the reaction (S)-2,3,4,5-tetrahydrodipicolinate + NADP(+) + H2O = (2S,4S)-4-hydroxy-2,3,4,5-tetrahydrodipicolinate + NADPH + H(+). It participates in amino-acid biosynthesis; L-lysine biosynthesis via DAP pathway; (S)-tetrahydrodipicolinate from L-aspartate: step 4/4. Functionally, catalyzes the conversion of 4-hydroxy-tetrahydrodipicolinate (HTPA) to tetrahydrodipicolinate. The polypeptide is 4-hydroxy-tetrahydrodipicolinate reductase (Exiguobacterium sp. (strain ATCC BAA-1283 / AT1b)).